Consider the following 328-residue polypeptide: Malate dehydrogenase (328 aa).

Residue 11–17 (GAAGQIG) participates in NAD(+) binding. Substrate contacts are provided by Arg92 and Arg98. Residues Asn105, Gln112, and 129 to 131 (VGN) each bind NAD(+). The substrate site is built by Asn131 and Arg162. Catalysis depends on His187, which acts as the Proton acceptor.

The protein belongs to the LDH/MDH superfamily. MDH type 2 family.

The enzyme catalyses (S)-malate + NAD(+) = oxaloacetate + NADH + H(+). Its function is as follows. Catalyzes the reversible oxidation of malate to oxaloacetate. In Coxiella burnetii (strain RSA 493 / Nine Mile phase I), this protein is Malate dehydrogenase.